A 124-amino-acid chain; its full sequence is Chemotaxis protein CheY1 (124 aa).

In terms of domain architecture, Response regulatory spans 2-120 (KLLVVDDSST…VLKEKLEVVL (119 aa)). Mg(2+) contacts are provided by D7, D8, D53, and N55. A 4-aspartylphosphate modification is found at D53.

In terms of assembly, interacts (when phosphorylated) with FliM. Mg(2+) is required as a cofactor. Post-translationally, phosphorylated by CheAY. Dephosphorylated (inactivated) by CheZ.

It localises to the cytoplasm. Its function is as follows. Chemotactic response regulator protein that modulates the rotation direction of bacterial flagellar motors. Plays an important role in the colonization and infection of Helicobacter pylori. Upon phosphorylation by CheA, interacts with the flagellar motor protein FliM to cause clockwise flagellar rotation and bacterial reversals, as opposed to straight swimming when CheY1 is not phosphorylated. The chain is Chemotaxis protein CheY1 from Helicobacter pylori (strain ATCC 700392 / 26695) (Campylobacter pylori).